The chain runs to 125 residues: C-X-C motif chemokine 9 (125 aa).

Residues 1-21 (MKKSAPLFLGIIFLTLTGVQG) form the signal peptide. Intrachain disulfides connect cysteine 30–cysteine 57 and cysteine 32–cysteine 73. Residues 91–125 (QVNQKKKQRKGKKYKKTKKVPKVKRSQRPSQKKTT) form a disordered region. Residues 93-125 (NQKKKQRKGKKYKKTKKVPKVKRSQRPSQKKTT) show a composition bias toward basic residues.

The protein belongs to the intercrine alpha (chemokine CxC) family.

Its subcellular location is the secreted. Functionally, cytokine that affects the growth, movement, or activation state of cells that participate in immune and inflammatory response. Chemotactic for activated T-cells. Binds to CXCR3. The polypeptide is C-X-C motif chemokine 9 (CXCL9) (Bos taurus (Bovine)).